A 123-amino-acid chain; its full sequence is Secreted LysM effector Lys1 (123 aa).

The signal sequence occupies residues 1–20 (MMGLAKTLLLASQLTAVVVA). In terms of domain architecture, LysM spans 72–118 (KFCWVQAGNKCYQVAMENHISLADFLKWNPGAGSDCRTLWANTYACV).

The protein belongs to the secreted LysM effector family.

Functionally, might have a role in sequestration of chitin oligosaccharides (breakdown products of fungal cell walls that are released during invasion and act as triggers of host immunity) to dampen host defense. This Pochonia chlamydosporia (strain 123) (Metacordyceps chlamydosporia) protein is Secreted LysM effector Lys1.